Reading from the N-terminus, the 296-residue chain is MIKQYLLVTKPGIIFGNLISVVGGFLLAAKGIIDYPLFLATLVGVSLVVASGCVFNNYIDRDIDKKMERTKNRVLVKGLIAPSVTLIYATVLGIAGFVLLYIAANPLAMWLAVMGFVVYVGVYSLYMKRHSVYGTLIGSLSGAAPPVIGYCAVTNAFDAGALILLAIFSLWQMPHSYAIAIFRFKDYQAAGIPVLPVVKGVSVAKNHITLYILAFMIATLMLALVGYAGYKYLIVAAVVSIWWLGMALRGYKTENDSIWARKLFVFSIVAITSLSVMMSIDFSVSSASPALLTYVW.

The next 9 membrane-spanning stretches (helical) occupy residues 13–33 (IIFG…KGII), 35–55 (YPLF…GCVF), 84–104 (VTLI…YIAA), 107–127 (LAMW…SLYM), 132–152 (VYGT…GYCA), 162–182 (LILL…IAIF), 208–228 (ITLY…VGYA), 229–249 (GYKY…MALR), and 264–284 (FVFS…DFSV).

It belongs to the UbiA prenyltransferase family. Protoheme IX farnesyltransferase subfamily.

The protein localises to the cell inner membrane. It catalyses the reaction heme b + (2E,6E)-farnesyl diphosphate + H2O = Fe(II)-heme o + diphosphate. The protein operates within porphyrin-containing compound metabolism; heme O biosynthesis; heme O from protoheme: step 1/1. Its function is as follows. Converts heme B (protoheme IX) to heme O by substitution of the vinyl group on carbon 2 of heme B porphyrin ring with a hydroxyethyl farnesyl side group. In Edwardsiella ictaluri (strain 93-146), this protein is Protoheme IX farnesyltransferase.